A 101-amino-acid polypeptide reads, in one-letter code: UPF0235 protein MmarC6_1603 (101 aa).

Belongs to the UPF0235 family.

In Methanococcus maripaludis (strain C6 / ATCC BAA-1332), this protein is UPF0235 protein MmarC6_1603.